The sequence spans 435 residues: MTTVPEPSAELLQRAGAVRLAAVDLGQTDDQQRADALQAMADALAERAEVIVAANREDLERSAAEGLAPALMARLKLDAGKLRGAIDGVRKLASLPDPLGRRQLHRELDQGLVLERISVPLGVVGVIFEARPDAVVQIASLAIRSGNGAMLKGGSEARCTNEAVMEALKLGLGRSAVAPDALTLLTTRQESLALLRLDGLVDLIIPRGSNELVRFIQDNTRIPVLGHADGICHLYVDAAADVDQAVRIAIDSKTQYPAACNAIETLLVHASIAPAFLASAVPAFQAAGVTLRGDEHSRQHGISDAATDEDWRTEYLDMILAVRVVPSMDAALEHIRRHGSRHTEAIATTDDQAAERFLGAVDSAGVYLNCSTRFADGFRYGFGAEVGISTQTLPPRGPVGLDGLVTYRYRLRGDGHIAADFADGTRSFTHTDLPL.

It belongs to the gamma-glutamyl phosphate reductase family.

The protein localises to the cytoplasm. It carries out the reaction L-glutamate 5-semialdehyde + phosphate + NADP(+) = L-glutamyl 5-phosphate + NADPH + H(+). It functions in the pathway amino-acid biosynthesis; L-proline biosynthesis; L-glutamate 5-semialdehyde from L-glutamate: step 2/2. Catalyzes the NADPH-dependent reduction of L-glutamate 5-phosphate into L-glutamate 5-semialdehyde and phosphate. The product spontaneously undergoes cyclization to form 1-pyrroline-5-carboxylate. The protein is Gamma-glutamyl phosphate reductase of Parasynechococcus marenigrum (strain WH8102).